The chain runs to 355 residues: Uroporphyrinogen decarboxylase (355 aa).

Substrate-binding positions include 27 to 31 (RQAGR), F46, D77, Y154, S209, and H327.

It belongs to the uroporphyrinogen decarboxylase family. In terms of assembly, homodimer.

It localises to the cytoplasm. It carries out the reaction uroporphyrinogen III + 4 H(+) = coproporphyrinogen III + 4 CO2. The protein operates within porphyrin-containing compound metabolism; protoporphyrin-IX biosynthesis; coproporphyrinogen-III from 5-aminolevulinate: step 4/4. In terms of biological role, catalyzes the decarboxylation of four acetate groups of uroporphyrinogen-III to yield coproporphyrinogen-III. This chain is Uroporphyrinogen decarboxylase, found in Nitrosomonas europaea (strain ATCC 19718 / CIP 103999 / KCTC 2705 / NBRC 14298).